The following is a 400-amino-acid chain: MSSKLVLVLNCGSSSLKFAIIDAVNGDEYLSGLAECFHLPEARIKWKMDGSKQEAALGAGAAHSEALNFIVNTILAQKPELSAQLTAIGHRIVHGGEKYTSSVVIDESVIQGIKDSASFAPLHNPAHLIGIAEALKSFPQLKDKNVAVFDTAFHQTMPEESYLYALPYSLYKEHGVRRYGAHGTSHFYVTQEAAKMLNKPVEELNIITCHLGNGGSVSAIRNGKCVDTSMGLTPLEGLVMGTRSGDIDPAIIFHLHDTLGMSVDQINKMLTKESGLLGLTEVTSDCRYVEDNYATKEDAKRAMDVYCHRLAKYIGSYTALMDGRLDAVVFTGGIGENAAMVRELSLGKLGVLGFEVDHERNLAARFGKSGFINKEGTRPAVVIPTNEELVIAQDASRLTA.

Asparagine 10 provides a ligand contact to Mg(2+). Lysine 17 contacts ATP. Residue arginine 91 coordinates substrate. Residue aspartate 150 is the Proton donor/acceptor of the active site. ATP-binding positions include histidine 210–glycine 214, aspartate 285–arginine 287, and glycine 333–asparagine 337. Mg(2+) is bound at residue glutamate 387.

This sequence belongs to the acetokinase family. As to quaternary structure, homodimer. Requires Mg(2+) as cofactor. It depends on Mn(2+) as a cofactor.

It localises to the cytoplasm. It carries out the reaction acetate + ATP = acetyl phosphate + ADP. It participates in metabolic intermediate biosynthesis; acetyl-CoA biosynthesis; acetyl-CoA from acetate: step 1/2. Functionally, catalyzes the formation of acetyl phosphate from acetate and ATP. Can also catalyze the reverse reaction. The sequence is that of Acetate kinase from Salmonella typhi.